A 291-amino-acid polypeptide reads, in one-letter code: Bifunctional protein FolD (291 aa).

NADP(+) contacts are provided by residues 168-170 (GRG), threonine 195, and isoleucine 236.

It belongs to the tetrahydrofolate dehydrogenase/cyclohydrolase family. As to quaternary structure, homodimer.

The catalysed reaction is (6R)-5,10-methylene-5,6,7,8-tetrahydrofolate + NADP(+) = (6R)-5,10-methenyltetrahydrofolate + NADPH. It catalyses the reaction (6R)-5,10-methenyltetrahydrofolate + H2O = (6R)-10-formyltetrahydrofolate + H(+). It functions in the pathway one-carbon metabolism; tetrahydrofolate interconversion. Its function is as follows. Catalyzes the oxidation of 5,10-methylenetetrahydrofolate to 5,10-methenyltetrahydrofolate and then the hydrolysis of 5,10-methenyltetrahydrofolate to 10-formyltetrahydrofolate. This chain is Bifunctional protein FolD, found in Bifidobacterium longum subsp. infantis (strain ATCC 15697 / DSM 20088 / JCM 1222 / NCTC 11817 / S12).